The sequence spans 240 residues: tRNA pseudouridine synthase B (240 aa).

Aspartate 54 (nucleophile) is an active-site residue.

Belongs to the pseudouridine synthase TruB family. Type 1 subfamily.

The enzyme catalyses uridine(55) in tRNA = pseudouridine(55) in tRNA. Its function is as follows. Responsible for synthesis of pseudouridine from uracil-55 in the psi GC loop of transfer RNAs. The chain is tRNA pseudouridine synthase B from Chlorobium phaeovibrioides (strain DSM 265 / 1930) (Prosthecochloris vibrioformis (strain DSM 265)).